The primary structure comprises 270 residues: Gene 1 protein (270 aa).

The interval 225–249 is disordered; the sequence is WAEEDPPVAAVPLEPEDATAPGKEP.

The polypeptide is Gene 1 protein (1) (Mycobacterium (Mycobacteriophage D29)).